A 615-amino-acid polypeptide reads, in one-letter code: Proteasome-associated ATPase (615 aa).

The disordered stretch occupies residues 1 to 27; sequence MSESERSEASEVFGTSPDSRLSSEDAA. A coiled-coil region spans residues 22–99; sequence SSEDAAELEQ…LREEVDRLGQ (78 aa). 302–307 is a binding site for ATP; sequence GCGKTL. The interval 614–615 is docks into pockets in the proteasome alpha-ring; the sequence is YL.

The protein belongs to the AAA ATPase family. In terms of assembly, homohexamer. Assembles into a hexameric ring structure that caps the 20S proteasome core. Strongly interacts with the prokaryotic ubiquitin-like protein Pup through a hydrophobic interface; the interacting region of ARC lies in its N-terminal coiled-coil domain. There is one Pup binding site per ARC hexamer ring. Upon ATP-binding, the C-terminus of ARC interacts with the alpha-rings of the proteasome core, possibly by binding to the intersubunit pockets.

The protein operates within protein degradation; proteasomal Pup-dependent pathway. Its function is as follows. ATPase which is responsible for recognizing, binding, unfolding and translocation of pupylated proteins into the bacterial 20S proteasome core particle. May be essential for opening the gate of the 20S proteasome via an interaction with its C-terminus, thereby allowing substrate entry and access to the site of proteolysis. Thus, the C-termini of the proteasomal ATPase may function like a 'key in a lock' to induce gate opening and therefore regulate proteolysis. This is Proteasome-associated ATPase from Mycolicibacterium vanbaalenii (strain DSM 7251 / JCM 13017 / BCRC 16820 / KCTC 9966 / NRRL B-24157 / PYR-1) (Mycobacterium vanbaalenii).